Here is a 182-residue protein sequence, read N- to C-terminus: UPF0316 protein BCB4264_A3368 (182 aa).

The next 3 helical transmembrane spans lie at 6–26 (LIFVLQIIYVPILTIRTILLV), 32–52 (SAAGVGLLEGAIYIVSLGIVF), and 58–78 (WMNIVAYVIGFSAGLLLGGYI).

Belongs to the UPF0316 family.

The protein localises to the cell membrane. This Bacillus cereus (strain B4264) protein is UPF0316 protein BCB4264_A3368.